Reading from the N-terminus, the 117-residue chain is Large ribosomal subunit protein uL18 (117 aa).

This sequence belongs to the universal ribosomal protein uL18 family. In terms of assembly, part of the 50S ribosomal subunit; part of the 5S rRNA/L5/L18/L25 subcomplex. Contacts the 5S and 23S rRNAs.

In terms of biological role, this is one of the proteins that bind and probably mediate the attachment of the 5S RNA into the large ribosomal subunit, where it forms part of the central protuberance. In Mycoplasma mobile (strain ATCC 43663 / 163K / NCTC 11711) (Mesomycoplasma mobile), this protein is Large ribosomal subunit protein uL18.